A 497-amino-acid chain; its full sequence is Probable cytosol aminopeptidase (497 aa).

Mn(2+)-binding residues include Lys-265 and Asp-270. Lys-277 is an active-site residue. Asp-288, Asp-347, and Glu-349 together coordinate Mn(2+). Arg-351 is a catalytic residue.

Belongs to the peptidase M17 family. Requires Mn(2+) as cofactor.

It localises to the cytoplasm. It carries out the reaction Release of an N-terminal amino acid, Xaa-|-Yaa-, in which Xaa is preferably Leu, but may be other amino acids including Pro although not Arg or Lys, and Yaa may be Pro. Amino acid amides and methyl esters are also readily hydrolyzed, but rates on arylamides are exceedingly low.. The catalysed reaction is Release of an N-terminal amino acid, preferentially leucine, but not glutamic or aspartic acids.. Functionally, presumably involved in the processing and regular turnover of intracellular proteins. Catalyzes the removal of unsubstituted N-terminal amino acids from various peptides. This Geobacillus thermodenitrificans (strain NG80-2) protein is Probable cytosol aminopeptidase.